A 609-amino-acid chain; its full sequence is Threonine--tRNA ligase (609 aa).

The tract at residues Met1 to Glu143 is editing domain. 2 catalytic regions span residues Pro195–Pro491 and Arg196–Pro491. Residues Cys288, His339, and His460 each contribute to the Zn(2+) site.

Belongs to the class-II aminoacyl-tRNA synthetase family. As to quaternary structure, homodimer. It depends on Zn(2+) as a cofactor.

It is found in the cytoplasm. It catalyses the reaction tRNA(Thr) + L-threonine + ATP = L-threonyl-tRNA(Thr) + AMP + diphosphate + H(+). In terms of biological role, catalyzes the attachment of threonine to tRNA(Thr) in a two-step reaction: L-threonine is first activated by ATP to form Thr-AMP and then transferred to the acceptor end of tRNA(Thr). Also edits incorrectly charged L-seryl-tRNA(Thr). This is Threonine--tRNA ligase from Pyrobaculum neutrophilum (strain DSM 2338 / JCM 9278 / NBRC 100436 / V24Sta) (Thermoproteus neutrophilus).